The primary structure comprises 240 residues: 4-hydroxy-tetrahydrodipicolinate reductase (240 aa).

NAD(+) is bound by residues 8–13 (GSTGKM), 78–80 (GTT), and 102–105 (SANM). Residue His134 is the Proton donor/acceptor of the active site. His135 contributes to the (S)-2,3,4,5-tetrahydrodipicolinate binding site. The active-site Proton donor is Lys138. A (S)-2,3,4,5-tetrahydrodipicolinate-binding site is contributed by 144–145 (GT).

This sequence belongs to the DapB family.

Its subcellular location is the cytoplasm. The catalysed reaction is (S)-2,3,4,5-tetrahydrodipicolinate + NAD(+) + H2O = (2S,4S)-4-hydroxy-2,3,4,5-tetrahydrodipicolinate + NADH + H(+). It catalyses the reaction (S)-2,3,4,5-tetrahydrodipicolinate + NADP(+) + H2O = (2S,4S)-4-hydroxy-2,3,4,5-tetrahydrodipicolinate + NADPH + H(+). The protein operates within amino-acid biosynthesis; L-lysine biosynthesis via DAP pathway; (S)-tetrahydrodipicolinate from L-aspartate: step 4/4. Catalyzes the conversion of 4-hydroxy-tetrahydrodipicolinate (HTPA) to tetrahydrodipicolinate. The polypeptide is 4-hydroxy-tetrahydrodipicolinate reductase (Rickettsia canadensis (strain McKiel)).